The primary structure comprises 482 residues: uncharacterized protein (482 aa).

An AB hydrolase-1 domain is found at 231–459; it reads FEGNAGFYEI…FDACNHYLID (229 aa).

This is an uncharacterized protein from Caenorhabditis elegans.